The primary structure comprises 425 residues: Inositol hexakisphosphate kinase 2 (425 aa).

ATP contacts are provided by residues 206–208 and aspartate 219; that span reads ENL. Substrate-binding positions include 215–223, lysine 221, and 235–242; these read PCVLDLKMG and KAANQIRK. Aspartate 382 contacts ATP. Histidine 385 contacts substrate.

It belongs to the inositol phosphokinase (IPK) family. In terms of tissue distribution, highly expressed in small intestine.

It localises to the nucleus. It carries out the reaction 1D-myo-inositol hexakisphosphate + ATP = 5-diphospho-1D-myo-inositol 1,2,3,4,6-pentakisphosphate + ADP. Its pathway is phospholipid metabolism; phosphatidylinositol metabolism. Its function is as follows. Converts inositol hexakisphosphate (InsP6) to diphosphoinositol pentakisphosphate (InsP7/PP-InsP5). The sequence is that of Inositol hexakisphosphate kinase 2 (Ip6k2) from Rattus norvegicus (Rat).